The primary structure comprises 119 residues: RNA guanine-N7 methyltransferase activating subunit (119 aa).

The interaction with RNMT stretch occupies residues 1–55 (MSDTSEEIPNFEEMFASRFTKDDKEYQEYLKRPPESPPIVEEWNSRAGGNQRNRG). Positions 30-119 (LKRPPESPPI…HNQRPPYGYY (90 aa)) are disordered. Ser-36 bears the Phosphoserine mark. The RNMT-activating domain motif lies at 36–42 (SPPIVEE). Residues 47 to 61 (AGGNQRNRGNWLQDN) are compositionally biased toward polar residues. Positions 56–119 (NWLQDNRQFR…HNQRPPYGYY (64 aa)) are RNA-binding. The segment covering 62–73 (RQFRGRDNRRGW) has biased composition (basic and acidic residues). Position 85 is an omega-N-methylarginine (Arg-85). Ser-86 carries the phosphoserine modification. Low complexity predominate over residues 89 to 112 (NNNYPQQRPEPYYQQQYTQYGHNQ).

The protein belongs to the RAM family. Interacts with RNMT; this interaction enhances mRNA binding and cap methyltransferase activity.

It localises to the nucleus. Regulatory subunit of the mRNA-capping methyltransferase RNMT:RAMAC complex that methylates the N7 position of the added guanosine to the 5'-cap structure of mRNAs. Promotes the recruitment of the methyl donor, S-adenosyl-L-methionine, to RNMT. Regulates RNMT expression by a post-transcriptional stabilizing mechanism. Binds RNA. The sequence is that of RNA guanine-N7 methyltransferase activating subunit (Ramac) from Mus musculus (Mouse).